Here is a 636-residue protein sequence, read N- to C-terminus: tRNA 5-methylaminomethyl-2-thiouridine biosynthesis bifunctional protein MnmC (636 aa).

Residues 1 to 202 (MTVSKILKQV…ERAALRAQSH (202 aa)) are tRNA (mnm(5)s(2)U34)-methyltransferase. Residues 227–636 (IGGGVASACL…GKALEMSGKS (410 aa)) form an FAD-dependent cmnm(5)s(2)U34 oxidoreductase region.

It in the N-terminal section; belongs to the methyltransferase superfamily. tRNA (mnm(5)s(2)U34)-methyltransferase family. This sequence in the C-terminal section; belongs to the DAO family. The cofactor is FAD.

Its subcellular location is the cytoplasm. It catalyses the reaction 5-aminomethyl-2-thiouridine(34) in tRNA + S-adenosyl-L-methionine = 5-methylaminomethyl-2-thiouridine(34) in tRNA + S-adenosyl-L-homocysteine + H(+). Functionally, catalyzes the last two steps in the biosynthesis of 5-methylaminomethyl-2-thiouridine (mnm(5)s(2)U) at the wobble position (U34) in tRNA. Catalyzes the FAD-dependent demodification of cmnm(5)s(2)U34 to nm(5)s(2)U34, followed by the transfer of a methyl group from S-adenosyl-L-methionine to nm(5)s(2)U34, to form mnm(5)s(2)U34. The sequence is that of tRNA 5-methylaminomethyl-2-thiouridine biosynthesis bifunctional protein MnmC from Shewanella halifaxensis (strain HAW-EB4).